Consider the following 305-residue polypeptide: Phosphatidylglycerol--prolipoprotein diacylglyceryl transferase (305 aa).

Helical transmembrane passes span 10–30, 59–79, and 92–112; these read FLISFTLFGLPIVVRWYGAII, LMLGLVLGIAGARIYYVAFEW, and LTTGGIAIHGAIIGALLSTVI. Arg140 lines the a 1,2-diacyl-sn-glycero-3-phospho-(1'-sn-glycerol) pocket. A run of 2 helical transmembrane segments spans residues 182-202 and 260-280; these read LFHPTFLYESVWNLVGVGILL and IRVAQLVSMVAIVVCGVLIFL.

The protein belongs to the Lgt family.

Its subcellular location is the cell membrane. It carries out the reaction L-cysteinyl-[prolipoprotein] + a 1,2-diacyl-sn-glycero-3-phospho-(1'-sn-glycerol) = an S-1,2-diacyl-sn-glyceryl-L-cysteinyl-[prolipoprotein] + sn-glycerol 1-phosphate + H(+). It functions in the pathway protein modification; lipoprotein biosynthesis (diacylglyceryl transfer). Catalyzes the transfer of the diacylglyceryl group from phosphatidylglycerol to the sulfhydryl group of the N-terminal cysteine of a prolipoprotein, the first step in the formation of mature lipoproteins. This chain is Phosphatidylglycerol--prolipoprotein diacylglyceryl transferase, found in Chloroflexus aggregans (strain MD-66 / DSM 9485).